A 225-amino-acid chain; its full sequence is MKHLFKLDPAKNLPHNSVTRLIHSGTDGFIIGGTDNLQTEAVENLYELLAETDLPIFLEVSDESMILPEAEHFLIPVVLNTENSKWTHGLHKELIKEMGEFIPWKRVTSEGYVILNKDAKVAQLTEAKTDLTEEDIIAYARLAENIFRLPIFYIEYSGMYGNPEVAKKVSAALDDTKFWYGGGIRSKEQAAEMAEYADTIIVGNIIYEDIEKALETTTVFAKKTV.

Lysine 6 contacts sn-glycerol 1-phosphate. Mg(2+)-binding residues include aspartate 8 and threonine 34. Residues 153–158 (YIEYSG), glycine 183, and 203–204 (GN) each bind sn-glycerol 1-phosphate.

It belongs to the GGGP/HepGP synthase family. Group I subfamily. Homodimer. Requires Mg(2+) as cofactor.

The catalysed reaction is sn-glycerol 1-phosphate + all-trans-heptaprenyl diphosphate = 3-heptaprenyl-sn-glycero-1-phosphate + diphosphate. It functions in the pathway membrane lipid metabolism; glycerophospholipid metabolism. Its function is as follows. Prenyltransferase that catalyzes in vivo the transfer of the heptaprenyl moiety of heptaprenyl pyrophosphate (HepPP; 35 carbon atoms) to the C3 hydroxyl of sn-glycerol-1-phosphate (G1P), producing heptaprenylglyceryl phosphate (HepGP). This reaction is an ether-bond-formation step in the biosynthesis of archaea-type G1P-based membrane lipids found in Bacillales. The chain is Heptaprenylglyceryl phosphate synthase from Listeria welshimeri serovar 6b (strain ATCC 35897 / DSM 20650 / CCUG 15529 / CIP 8149 / NCTC 11857 / SLCC 5334 / V8).